A 326-amino-acid chain; its full sequence is Biotin synthase (326 aa).

Positions asparagine 51–serine 275 constitute a Radical SAM core domain. Residues cysteine 66, cysteine 70, and cysteine 73 each contribute to the [4Fe-4S] cluster site. Cysteine 110, cysteine 141, cysteine 201, and arginine 273 together coordinate [2Fe-2S] cluster.

The protein belongs to the radical SAM superfamily. Biotin synthase family. In terms of assembly, homodimer. It depends on [4Fe-4S] cluster as a cofactor. The cofactor is [2Fe-2S] cluster.

It catalyses the reaction (4R,5S)-dethiobiotin + (sulfur carrier)-SH + 2 reduced [2Fe-2S]-[ferredoxin] + 2 S-adenosyl-L-methionine = (sulfur carrier)-H + biotin + 2 5'-deoxyadenosine + 2 L-methionine + 2 oxidized [2Fe-2S]-[ferredoxin]. Its pathway is cofactor biosynthesis; biotin biosynthesis; biotin from 7,8-diaminononanoate: step 2/2. Catalyzes the conversion of dethiobiotin (DTB) to biotin by the insertion of a sulfur atom into dethiobiotin via a radical-based mechanism. This Aromatoleum aromaticum (strain DSM 19018 / LMG 30748 / EbN1) (Azoarcus sp. (strain EbN1)) protein is Biotin synthase.